A 585-amino-acid chain; its full sequence is Folylpolyglutamate synthase, mitochondrial (585 aa).

Residues 1–39 (MSRARCHALFLAAVSPRGATTRVAVRRGLSAWPVLQEPD) constitute a mitochondrion transit peptide. 103 to 106 (GKGS) serves as a coordination point for ATP. Residues S127, E198, and H226 each contribute to the Mg(2+) site. 2 residues coordinate ATP: R361 and D375. The interval 477-497 (EEQVSPDPWSTPGQEQDGPAS) is disordered. S537 is subject to Phosphoserine.

The protein belongs to the folylpolyglutamate synthase family. As to quaternary structure, monomer. Requires a monovalent cation as cofactor.

Its subcellular location is the mitochondrion inner membrane. It is found in the mitochondrion matrix. It localises to the cytoplasm. It carries out the reaction (6S)-5,6,7,8-tetrahydrofolyl-(gamma-L-Glu)(n) + L-glutamate + ATP = (6S)-5,6,7,8-tetrahydrofolyl-(gamma-L-Glu)(n+1) + ADP + phosphate + H(+). It participates in cofactor biosynthesis; tetrahydrofolylpolyglutamate biosynthesis. Its function is as follows. Catalyzes conversion of folates to polyglutamate derivatives allowing concentration of folate compounds in the cell and the intracellular retention of these cofactors, which are important substrates for most of the folate-dependent enzymes that are involved in one-carbon transfer reactions involved in purine, pyrimidine and amino acid synthesis. This is Folylpolyglutamate synthase, mitochondrial (FPGS) from Bos taurus (Bovine).